Reading from the N-terminus, the 502-residue chain is Galactose/methyl galactoside import ATP-binding protein MglA (502 aa).

2 ABC transporter domains span residues 10-245 and 255-502; these read LEMT…VGRE and NTPK…SRYL. Position 42–49 (42–49) interacts with ATP; it reads GENGAGKS.

Belongs to the ABC transporter superfamily. Galactose/methyl galactoside importer (TC 3.A.1.2.3) family. In terms of assembly, the complex is composed of one ATP-binding protein (MglA), two transmembrane proteins (MglC) and a solute-binding protein (MglB).

It localises to the cell inner membrane. The catalysed reaction is D-galactose(out) + ATP + H2O = D-galactose(in) + ADP + phosphate + H(+). It catalyses the reaction methyl beta-D-galactoside(out) + ATP + H2O = methyl beta-D-galactoside(in) + ADP + phosphate + H(+). Functionally, part of the ABC transporter complex MglABC involved in galactose/methyl galactoside import. Responsible for energy coupling to the transport system. The protein is Galactose/methyl galactoside import ATP-binding protein MglA of Vibrio vulnificus (strain CMCP6).